The sequence spans 603 residues: Rab proteins geranylgeranyltransferase component A (603 aa).

Serine 470 bears the Phosphoserine mark.

The protein belongs to the Rab GDI family.

In terms of biological role, substrate-binding subunit (component A) of the Rab geranylgeranyltransferase (GGTase) complex. Binds unprenylated Rab proteins and presents the substrate peptide to the catalytic component B. The component A is thought to be regenerated by transferring its prenylated Rab back to the donor membrane. The chain is Rab proteins geranylgeranyltransferase component A (MRS6) from Saccharomyces cerevisiae (strain ATCC 204508 / S288c) (Baker's yeast).